The following is a 248-amino-acid chain: PF03932 family protein CutC (248 aa).

This sequence belongs to the CutC family. As to quaternary structure, homodimer.

It is found in the cytoplasm. The protein is PF03932 family protein CutC of Shigella boydii serotype 4 (strain Sb227).